Consider the following 276-residue polypeptide: Hydroxyethylthiazole kinase (276 aa).

ATP contacts are provided by Arg-126 and Ser-172. Substrate is bound at residue Gly-199.

This sequence belongs to the Thz kinase family. Mg(2+) serves as cofactor.

It carries out the reaction 5-(2-hydroxyethyl)-4-methylthiazole + ATP = 4-methyl-5-(2-phosphooxyethyl)-thiazole + ADP + H(+). Its pathway is cofactor biosynthesis; thiamine diphosphate biosynthesis; 4-methyl-5-(2-phosphoethyl)-thiazole from 5-(2-hydroxyethyl)-4-methylthiazole: step 1/1. Functionally, catalyzes the phosphorylation of the hydroxyl group of 4-methyl-5-beta-hydroxyethylthiazole (THZ). This chain is Hydroxyethylthiazole kinase, found in Burkholderia pseudomallei (strain 1106a).